The chain runs to 225 residues: Methyl-CpG-binding domain-containing protein 6 (225 aa).

Positions 25-92 (GDGTLDSSAK…PGWRVEDKIR (68 aa)) are disordered. An MBD domain is found at 71–146 (RKRAAPGDNW…ENTYFNPDHF (76 aa)).

Homodimer and heterodimer with MBD5. Interacts with DDM1 via its MBD domain. Interacts with NTF2, RPS2C, HDA6 and AGO4. Expressed in rosette leaves, buds, flowers, stems, mature seeds and roots.

The protein resides in the nucleus. It localises to the chromosome. The protein localises to the nucleolus. Transcriptional regulator that binds CpG, CpNpN and CpNpG (N is A, T, or C) islands in promoters regardless the DNA methylation status. Plays probably a role in gene silencing. May associate with histone deacetylase proteins (HDAC). Required for nucleolar dominance that consist in the silencing of rRNA genes inherited from one progenitor in genetic hybrids. Recruited to rRNA genes in a DRM2-dependent manner. Maintains gene silencing by interacting with RNA binding proteins (e.g. NTF2, RPS2C, HDA6 and AGO4) and by regulating DNA methylation status. This chain is Methyl-CpG-binding domain-containing protein 6, found in Arabidopsis thaliana (Mouse-ear cress).